A 339-amino-acid polypeptide reads, in one-letter code: DNA-directed RNA polymerase subunit alpha (339 aa).

Residues Met1–Glu233 are alpha N-terminal domain (alpha-NTD). The tract at residues Lys264–Phe339 is alpha C-terminal domain (alpha-CTD).

Belongs to the RNA polymerase alpha chain family. As to quaternary structure, in plastids the minimal PEP RNA polymerase catalytic core is composed of four subunits: alpha, beta, beta', and beta''. When a (nuclear-encoded) sigma factor is associated with the core the holoenzyme is formed, which can initiate transcription.

It is found in the plastid. The protein localises to the chloroplast. The catalysed reaction is RNA(n) + a ribonucleoside 5'-triphosphate = RNA(n+1) + diphosphate. In terms of biological role, DNA-dependent RNA polymerase catalyzes the transcription of DNA into RNA using the four ribonucleoside triphosphates as substrates. The sequence is that of DNA-directed RNA polymerase subunit alpha from Psathyrostachys rupestris (Hordeum rupestre).